A 531-amino-acid polypeptide reads, in one-letter code: Methyl-accepting chemotaxis protein McpN (531 aa).

Topologically, residues 1-24 are cytoplasmic; it reads MNESVARVFDRILRGLGLKTLNAQ. Residues 25 to 45 traverse the membrane as a helical segment; that stretch reads FLLSYALMFGLAACASVALYL. Residues 46–174 are Periplasmic-facing; that stretch reads SMSISPETIN…LMSARADSVQ (129 aa). The tract at residues 52-140 is pilJ-type; sequence ETINVAGAQR…AMLDQVAQPA (89 aa). The N-box signature appears at 54–65; the sequence is INVAGAQRMLSQ. Arg-61 provides a ligand contact to nitrate. The chain crosses the membrane as a helical span at residues 175 to 195; the sequence is HTQMWIAFGCLLAILVLVVLG. The Cytoplasmic portion of the chain corresponds to 196–531; it reads RQFGLAPLMR…LRVVLGRFRT (336 aa). Positions 201-254 constitute an HAMP domain; it reads APLMRQLRGLEVALTEVGAANFTHALAAGHADNEIGRIVAGYERMRQDVSGLLA. In terms of domain architecture, Methyl-accepting transducer spans 259–495; that stretch reads SAAETDKDVA…DIDRNITNVS (237 aa).

The protein belongs to the methyl-accepting chemotaxis (MCP) protein family. As to quaternary structure, ligand free ligand-binding domain (LBD) is present in a monomer-dimer equilibrium. Nitrate binding to the periplasmic LBD stabilizes the homodimer.

The protein localises to the cell inner membrane. Chemotactic-signal transducers respond to changes in the concentration of attractants and repellents in the environment, transduce a signal from the outside to the inside of the cell, and facilitate sensory adaptation through the variation of the level of methylation. McpN is a chemoreceptor that recognizes specifically nitrate and mediates chemoattraction. Binds nitrate specifically and shows no affinity for other ligands such as nitrite. McpN-mediated taxis occurs only under nitrate starvation conditions. The protein is Methyl-accepting chemotaxis protein McpN of Pseudomonas aeruginosa (strain ATCC 15692 / DSM 22644 / CIP 104116 / JCM 14847 / LMG 12228 / 1C / PRS 101 / PAO1).